The sequence spans 485 residues: Aspartyl/glutamyl-tRNA(Asn/Gln) amidotransferase subunit B (485 aa).

The protein belongs to the GatB/GatE family. GatB subfamily. As to quaternary structure, heterotrimer of A, B and C subunits.

It catalyses the reaction L-glutamyl-tRNA(Gln) + L-glutamine + ATP + H2O = L-glutaminyl-tRNA(Gln) + L-glutamate + ADP + phosphate + H(+). The enzyme catalyses L-aspartyl-tRNA(Asn) + L-glutamine + ATP + H2O = L-asparaginyl-tRNA(Asn) + L-glutamate + ADP + phosphate + 2 H(+). Functionally, allows the formation of correctly charged Asn-tRNA(Asn) or Gln-tRNA(Gln) through the transamidation of misacylated Asp-tRNA(Asn) or Glu-tRNA(Gln) in organisms which lack either or both of asparaginyl-tRNA or glutaminyl-tRNA synthetases. The reaction takes place in the presence of glutamine and ATP through an activated phospho-Asp-tRNA(Asn) or phospho-Glu-tRNA(Gln). The sequence is that of Aspartyl/glutamyl-tRNA(Asn/Gln) amidotransferase subunit B from Borreliella afzelii (strain PKo) (Borrelia afzelii).